A 787-amino-acid polypeptide reads, in one-letter code: Protein translocase subunit SecA (787 aa).

ATP contacts are provided by residues glutamine 85, 103-107, and aspartate 492; that span reads GEGKT.

Belongs to the SecA family. As to quaternary structure, monomer and homodimer. Part of the essential Sec protein translocation apparatus which comprises SecA, SecYEG and auxiliary proteins SecDF. Other proteins may also be involved.

The protein localises to the cell membrane. It localises to the cytoplasm. It catalyses the reaction ATP + H2O + cellular proteinSide 1 = ADP + phosphate + cellular proteinSide 2.. Part of the Sec protein translocase complex. Interacts with the SecYEG preprotein conducting channel. Has a central role in coupling the hydrolysis of ATP to the transfer of proteins into and across the cell membrane, serving as an ATP-driven molecular motor driving the stepwise translocation of polypeptide chains across the membrane. The protein is Protein translocase subunit SecA of Lacticaseibacillus casei (strain BL23) (Lactobacillus casei).